The following is a 524-amino-acid chain: Histidine ammonia-lyase (524 aa).

The segment at residues 139-141 is a cross-link (5-imidazolinone (Ala-Gly)); it reads ASG. Serine 140 is modified (2,3-didehydroalanine (Ser)). Residues 500–524 form a disordered region; it reads ADTQAPAPAKLPDSGDEDRDTTSRH.

The protein belongs to the PAL/histidase family. Contains an active site 4-methylidene-imidazol-5-one (MIO), which is formed autocatalytically by cyclization and dehydration of residues Ala-Ser-Gly.

The protein localises to the cytoplasm. It catalyses the reaction L-histidine = trans-urocanate + NH4(+). It participates in amino-acid degradation; L-histidine degradation into L-glutamate; N-formimidoyl-L-glutamate from L-histidine: step 1/3. This Deinococcus radiodurans (strain ATCC 13939 / DSM 20539 / JCM 16871 / CCUG 27074 / LMG 4051 / NBRC 15346 / NCIMB 9279 / VKM B-1422 / R1) protein is Histidine ammonia-lyase (hutH).